We begin with the raw amino-acid sequence, 207 residues long: Imidazole glycerol phosphate synthase subunit HisH (207 aa).

Residues 1–206 (MMIVIDYDAG…KEYVYENTAR (206 aa)) enclose the Glutamine amidotransferase type-1 domain. The active-site Nucleophile is the Cys79. Catalysis depends on residues His181 and Glu183.

In terms of assembly, heterodimer of HisH and HisF.

It localises to the cytoplasm. It catalyses the reaction 5-[(5-phospho-1-deoxy-D-ribulos-1-ylimino)methylamino]-1-(5-phospho-beta-D-ribosyl)imidazole-4-carboxamide + L-glutamine = D-erythro-1-(imidazol-4-yl)glycerol 3-phosphate + 5-amino-1-(5-phospho-beta-D-ribosyl)imidazole-4-carboxamide + L-glutamate + H(+). It carries out the reaction L-glutamine + H2O = L-glutamate + NH4(+). It participates in amino-acid biosynthesis; L-histidine biosynthesis; L-histidine from 5-phospho-alpha-D-ribose 1-diphosphate: step 5/9. In terms of biological role, IGPS catalyzes the conversion of PRFAR and glutamine to IGP, AICAR and glutamate. The HisH subunit catalyzes the hydrolysis of glutamine to glutamate and ammonia as part of the synthesis of IGP and AICAR. The resulting ammonia molecule is channeled to the active site of HisF. The protein is Imidazole glycerol phosphate synthase subunit HisH of Streptococcus sanguinis (strain SK36).